Reading from the N-terminus, the 492-residue chain is Putative protein disulfide-isomerase C1F5.02 (492 aa).

An N-terminal signal peptide occupies residues 1-22; sequence MKISNLLAAFLAFSGGFFCASA. In terms of domain architecture, Thioredoxin 1 spans 23-128; the sequence is EVPKVNKEGL…LVKYMRKQLL (106 aa). Residues Cys-51 and Cys-54 each act as nucleophile in the active site. A disulfide bond links Cys-51 and Cys-54. N-linked (GlcNAc...) asparagine glycosylation is found at Asn-161 and Asn-257. The Thioredoxin 2 domain maps to 323–462; the sequence is ELTAKAMTKF…LSAFIDKHAS (140 aa). Residues Cys-385 and Cys-388 each act as nucleophile in the active site. Cys-385 and Cys-388 are oxidised to a cystine. Residues 468-492 are disordered; sequence KEKESVPAPDLEDQVAVEDEMADEL. Residues 477–492 are compositionally biased toward acidic residues; the sequence is DLEDQVAVEDEMADEL. Residues 489-492 carry the Prevents secretion from ER motif; it reads ADEL.

Belongs to the protein disulfide isomerase family.

It is found in the endoplasmic reticulum lumen. The catalysed reaction is Catalyzes the rearrangement of -S-S- bonds in proteins.. Participates in the folding of proteins containing disulfide bonds, may be involved in glycosylation, prolyl hydroxylation and triglyceride transfer. The sequence is that of Putative protein disulfide-isomerase C1F5.02 from Schizosaccharomyces pombe (strain 972 / ATCC 24843) (Fission yeast).